The sequence spans 126 residues: Large ribosomal subunit protein bL12 (126 aa).

The protein belongs to the bacterial ribosomal protein bL12 family. Homodimer. Part of the ribosomal stalk of the 50S ribosomal subunit. Forms a multimeric L10(L12)X complex, where L10 forms an elongated spine to which 2 to 4 L12 dimers bind in a sequential fashion. Binds GTP-bound translation factors.

Functionally, forms part of the ribosomal stalk which helps the ribosome interact with GTP-bound translation factors. Is thus essential for accurate translation. This chain is Large ribosomal subunit protein bL12, found in Chlorobium phaeobacteroides (strain BS1).